A 298-amino-acid polypeptide reads, in one-letter code: GTPase Era (298 aa).

One can recognise an Era-type G domain in the interval 3 to 170; that stretch reads KSGFVAILGR…VQLLKDNLEE (168 aa). The interval 11 to 18 is G1; that stretch reads GRPNVGKS. 11–18 lines the GTP pocket; that stretch reads GRPNVGKS. Positions 37–41 are G2; it reads QTTRN. Positions 58-61 are G3; sequence DTPG. Residues 58 to 62 and 120 to 123 contribute to the GTP site; these read DTPGI and NKID. The segment at 120 to 123 is G4; it reads NKID. The tract at residues 149 to 151 is G5; sequence ISA. The region spanning 201–279 is the KH type-2 domain; the sequence is TQQEVPHSVA…YLETWVKVKK (79 aa).

This sequence belongs to the TRAFAC class TrmE-Era-EngA-EngB-Septin-like GTPase superfamily. Era GTPase family. Monomer.

It is found in the cytoplasm. The protein localises to the cell membrane. An essential GTPase that binds both GDP and GTP, with rapid nucleotide exchange. Plays a role in 16S rRNA processing and 30S ribosomal subunit biogenesis and possibly also in cell cycle regulation and energy metabolism. The polypeptide is GTPase Era (Streptococcus equi subsp. zooepidemicus (strain MGCS10565)).